A 226-amino-acid chain; its full sequence is V-type proton ATPase subunit E 2 (226 aa).

The protein belongs to the V-ATPase E subunit family. In terms of assembly, V-ATPase is a heteromultimeric enzyme made up of two complexes: the ATP-hydrolytic V1 complex and the proton translocation V0 complex. The V1 complex consists of three catalytic AB heterodimers that form a heterohexamer, three peripheral stalks each consisting of EG heterodimers, one central rotor including subunits D and F, and the regulatory subunits C and H. The proton translocation complex V0 consists of the proton transport subunit a, a ring of proteolipid subunits c9c'', rotary subunit d, subunits e and f, and the accessory subunits ATP6AP1/Ac45 and ATP6AP2/PRR. As to expression, testis specific.

In terms of biological role, subunit of the V1 complex of vacuolar(H+)-ATPase (V-ATPase), a multisubunit enzyme composed of a peripheral complex (V1) that hydrolyzes ATP and a membrane integral complex (V0) that translocates protons. V-ATPase is responsible for acidifying and maintaining the pH of intracellular compartments and in some cell types, is targeted to the plasma membrane, where it is responsible for acidifying the extracellular environment. The sequence is that of V-type proton ATPase subunit E 2 (Atp6v1e2) from Mus musculus (Mouse).